The following is a 260-amino-acid chain: Putative [LysW]-aminoadipate/[LysW]-glutamate kinase (260 aa).

Residues 35–36 (GG), Arg62, and Asn162 each bind substrate.

The protein belongs to the acetylglutamate kinase family. LysZ subfamily.

It localises to the cytoplasm. The enzyme catalyses [amino-group carrier protein]-C-terminal-N-(1,4-dicarboxybutan-1-yl)-L-glutamine + ATP = [amino-group carrier protein]-C-terminal-N-(1-carboxy-5-phosphooxy-5-oxopentan-1-yl)-L-glutamine + ADP. It catalyses the reaction [amino-group carrier protein]-C-terminal-gamma-(L-glutamyl)-L-glutamate + ATP = [amino-group carrier protein]-C-terminal-gamma-(5-phospho-L-glutamyl)-L-glutamate + ADP. It participates in amino-acid biosynthesis; L-lysine biosynthesis via AAA pathway; L-lysine from L-alpha-aminoadipate (Thermus route): step 2/5. It functions in the pathway amino-acid biosynthesis; L-arginine biosynthesis. Involved in both the arginine and lysine biosynthetic pathways. Phosphorylates the LysW-bound precursors glutamate (for arginine biosynthesis), respectively alpha-aminoadipate (for lysine biosynthesis). This chain is Putative [LysW]-aminoadipate/[LysW]-glutamate kinase, found in Pyrobaculum neutrophilum (strain DSM 2338 / JCM 9278 / NBRC 100436 / V24Sta) (Thermoproteus neutrophilus).